The sequence spans 382 residues: MKALHFGAGNIGRGFIGKLLADAGIQLTFADVNQVVLDALNARHSYQVHVVGETEQVDTVSGVNAVSSIGDDVVDLIAQVDLVTTAVGPVVLERIAPAIAKGLVKRKEQGNESPLNIIACENMVRGTTQLKGHVMNALPEDAKAWVEEHVGFVDSAVDRIVPPSASATNDPLEVTVETFSEWIVDKTQFKGALPNIPSMELTDNLMAFVERKLFTLNTGHAITAYLGKLAGHQTIRDAILDEKIRAVVKGAMEESGAVLIKRYGFDADKHAAYIQKILGRFENPYLKDDVERVGRQPLRKLSAGDRLIKPLLGTLEYSLPHKNLIQGIAGAMHFRSEDDPQAQELAALIADKGPQAALAQISGLDANSEVVSEAVTAYKAMQ.

3–14 (ALHFGAGNIGRG) serves as a coordination point for NAD(+). N6-acetyllysine is present on K269.

This sequence belongs to the mannitol dehydrogenase family.

It carries out the reaction D-mannitol 1-phosphate + NAD(+) = beta-D-fructose 6-phosphate + NADH + H(+). The chain is Mannitol-1-phosphate 5-dehydrogenase from Shigella boydii serotype 18 (strain CDC 3083-94 / BS512).